The primary structure comprises 910 residues: Inactive disease susceptibility protein LOV1 (910 aa).

Residues 22–60 (ARLNGIGEQVDGLKRQLGRLQSLLKDADAKKHESERVRN) are a coiled coil. The NB-ARC domain maps to 169 to 461 (EQSVEALAGH…AAEGIITSSD (293 aa)). LRR repeat units lie at residues 584–609 (LPLL…IGDL), 610–632 (IHLR…LRNL), and 634–655 (LLLY…LKEM).

This sequence belongs to the disease resistance NB-LRR family. RPP8/HRT subfamily.

This is Inactive disease susceptibility protein LOV1 (LOV1) from Arabidopsis thaliana (Mouse-ear cress).